The following is a 343-amino-acid chain: Follistatin (343 aa).

The first 28 residues, 1–28, serve as a signal peptide directing secretion; that stretch reads MLNQRIHPGMLVLLMFLYHFMEDHTAQA. The region spanning 29–102 is the TB domain; that stretch reads GNCWLRQARN…TCENVDCGPG (74 aa). Intrachain disulfides connect C31–C54, C41–C87, C55–C90, C94–C105, C99–C115, C117–C149, C121–C142, and C131–C163. In terms of domain architecture, Follistatin-like 1 spans 93-116; the sequence is TCENVDCGPGKKCKMNKKNKPRCV. Kazal-like domains follow at residues 99 to 165, 185 to 240, and 263 to 317; these read CGPG…KCKK, NAYC…KCIK, and RGRC…SCNS. A glycan (N-linked (GlcNAc...) asparagine) is linked at N123. Positions 166–189 constitute a Follistatin-like 2 domain; sequence TCRDVLCPGSSTCVVDQTNNAYCV. Intrachain disulfides connect C191–C224, C195–C217, and C206–C238. One can recognise a Follistatin-like 3 domain in the interval 243 to 267; the sequence is SCEDIQCSAGKKCLWDFKVGRGRCA. Disulfide bonds link C269-C301, C273-C294, and C283-C315. The N-linked (GlcNAc...) asparagine glycan is linked to N287. A disordered region spans residues 315-343; that stretch reads CNSINEDPEEEEEDEDQDYSFPISSILEW. Acidic residues predominate over residues 320-332; sequence EDPEEEEEDEDQD.

As to quaternary structure, monomer. In terms of tissue distribution, ciliary ganglion neurons. Levels are higher in the iris than the choroid.

The protein resides in the secreted. Its function is as follows. Binds directly to activin and functions as an activin antagonist. Inhibits activin A signaling in the iris and regulates somatostatin phenotype in ciliary ganglion neurons. Specific inhibitor of the biosynthesis and secretion of pituitary follicle stimulating hormone (FSH). The polypeptide is Follistatin (FST) (Gallus gallus (Chicken)).